Consider the following 313-residue polypeptide: Dioxygenase swnH2 (313 aa).

3 residues coordinate Fe cation: His155, Asp157, and His232.

It belongs to the PhyH family. In terms of assembly, homodimer. Fe cation is required as a cofactor.

It functions in the pathway mycotoxin biosynthesis. In terms of biological role, aminotransferase; part of the gene cluster that mediates the biosynthesis of swainsonine (SW), a cytotoxic fungal alkaloid and a potential cancer therapy drug. Swainsonine production occurs via a multibranched pathway and is dispensable for fungal colonization of plants and infection of insect hosts. The first step of swainsonine biosynthesis is the production of the precursor pipecolic acid (PA) via conversion of L-lysine (Lys) to 1-piperideine-6-carboxylate (P6C) by the aminotransferase swnA, the latter being further reduced to PA by the reductase swnR. The PKS-NRPS hybrid synthetase swnK uptakes and condensates PA and malonyl-CoA with and without skipping of the ketoreductase (KR) domain in order to produce 3 intermediates, 1-oxoindolizidine, (1S)-1-hydroxyindolizin, and (1R)-1-hydroxyindolizine; with the transisomer (1S)-1-hydroxyindolizin being predominant. The terminal thioester reductase (TE) domain of swnK is involved in reduction of the thioester bond to release the intermediate aldehydes. The oxidoreductase swnN could contribute to the reduction of 1-oxoindolizidine to (1S)-1-hydroxyindolizin and (1R)-1-hydroxyindolizine, contributing to the major route of SW production. The dioxygenase swnH2 would be responsible for the oxidization of (1R)-1-hydroxyindolizine into (1R,2S)-1,2-dihydroxyindolizine and of (1S)-1-hydroxyindolizin to yield both (1R,2S)-1,2-dihydroxyindolizine and (1S,2S)-1,2-dihydroxyindolizine. The dioxygenase swnH1 then performs the conversion of the 1,2-dihydroxyindolizine epimers to SW. This Arthroderma benhamiae (strain ATCC MYA-4681 / CBS 112371) (Trichophyton mentagrophytes) protein is Dioxygenase swnH2.